A 248-amino-acid polypeptide reads, in one-letter code: DNA-directed RNA polymerase subunit Rpo3 (248 aa).

This sequence belongs to the archaeal Rpo3/eukaryotic RPB3 RNA polymerase subunit family. In terms of assembly, part of the RNA polymerase complex.

It localises to the cytoplasm. It catalyses the reaction RNA(n) + a ribonucleoside 5'-triphosphate = RNA(n+1) + diphosphate. In terms of biological role, DNA-dependent RNA polymerase (RNAP) catalyzes the transcription of DNA into RNA using the four ribonucleoside triphosphates as substrates. This is DNA-directed RNA polymerase subunit Rpo3 from Halobacterium salinarum (strain ATCC 29341 / DSM 671 / R1).